A 227-amino-acid polypeptide reads, in one-letter code: MFESISGILTLHERERLCVEVHGIEWEIAVSAYSSAAFGEVGSHVKVFTWLYHREDALRLFGFSNVQERTLFLSLTKVEGIGPKQALKVLSSISSQALCAALDTGDLCALQRIPGIGKKTAQRMLLALKGTLALTDAASCAQSQTDDRAAHPSNLGCAPHAREIEDLVTALVQMGYDRKMAAEVIAQESAALCSVGRSLYEEEATVLKRAILALSIAHPHAVAPAAE.

The segment at 1–64 (MFESISGILT…EDALRLFGFS (64 aa)) is domain I. The domain II stretch occupies residues 65 to 143 (NVQERTLFLS…LTDAASCAQS (79 aa)). The segment at 144–158 (QTDDRAAHPSNLGCA) is flexible linker. The interval 159 to 227 (PHAREIEDLV…HPHAVAPAAE (69 aa)) is domain III.

This sequence belongs to the RuvA family. As to quaternary structure, homotetramer. Forms an RuvA(8)-RuvB(12)-Holliday junction (HJ) complex. HJ DNA is sandwiched between 2 RuvA tetramers; dsDNA enters through RuvA and exits via RuvB. An RuvB hexamer assembles on each DNA strand where it exits the tetramer. Each RuvB hexamer is contacted by two RuvA subunits (via domain III) on 2 adjacent RuvB subunits; this complex drives branch migration. In the full resolvosome a probable DNA-RuvA(4)-RuvB(12)-RuvC(2) complex forms which resolves the HJ.

The protein resides in the cytoplasm. In terms of biological role, the RuvA-RuvB-RuvC complex processes Holliday junction (HJ) DNA during genetic recombination and DNA repair, while the RuvA-RuvB complex plays an important role in the rescue of blocked DNA replication forks via replication fork reversal (RFR). RuvA specifically binds to HJ cruciform DNA, conferring on it an open structure. The RuvB hexamer acts as an ATP-dependent pump, pulling dsDNA into and through the RuvAB complex. HJ branch migration allows RuvC to scan DNA until it finds its consensus sequence, where it cleaves and resolves the cruciform DNA. The polypeptide is Holliday junction branch migration complex subunit RuvA (Treponema pallidum (strain Nichols)).